We begin with the raw amino-acid sequence, 696 residues long: Spindle assembly checkpoint component MAD1 (696 aa).

Disordered regions lie at residues 1-22 and 394-415; these read MSTG…SINN and QIHA…TENK. The segment covering 402-413 has biased composition (basic and acidic residues); sequence KQQEQEKEENTE.

The protein belongs to the MAD1 family. As to quaternary structure, component of the mitotic checkpoint complex (MCC).

Its subcellular location is the nucleus. In terms of biological role, central component of the spindle assembly checkpoint which is a feedback control that prevents cells with incompletely assembled spindles from leaving mitosis. The chain is Spindle assembly checkpoint component MAD1 from Candida albicans (strain SC5314 / ATCC MYA-2876) (Yeast).